Reading from the N-terminus, the 322-residue chain is Germ cell-specific gene 1-like protein (322 aa).

Over methionine 1–arginine 8 the chain is Cytoplasmic. A helical membrane pass occupies residues alanine 9 to threonine 29. At threonine 30–lysine 122 the chain is on the extracellular side. A helical transmembrane segment spans residues glycine 123–phenylalanine 143. At serine 144–asparagine 163 the chain is on the cytoplasmic side. Residues alanine 164–tyrosine 184 traverse the membrane as a helical segment. Over threonine 185–glycine 207 the chain is Extracellular. The chain crosses the membrane as a helical span at residues tryptophan 208–leucine 228. At asparagine 229–valine 322 the chain is on the cytoplasmic side. Serine 274 bears the Phosphoserine mark.

Belongs to the GSG1 family. As to quaternary structure, component of the inner core of AMPAR complexes. AMPAR complexes consist of an inner core made of 4 pore-forming GluA/GRIA proteins (GRIA1, GRIA2, GRIA3 and GRIA4) and 4 major auxiliary subunits arranged in a twofold symmetry. One of the two pairs of distinct binding sites is occupied either by CNIH2, CNIH3 or CACNG2, CACNG3. The other harbors CACNG2, CACNG3, CACNG4, CACNG8 or GSG1L. This inner core of AMPAR complexes is complemented by outer core constituents binding directly to the GluA/GRIA proteins at sites distinct from the interaction sites of the inner core constituents. Outer core constituents include at least PRRT1, PRRT2, CKAMP44/SHISA9, FRRS1L and NRN1. The proteins of the inner and outer core serve as a platform for other, more peripherally associated AMPAR constituents. Alone or in combination, these auxiliary subunits control the gating and pharmacology of the AMPAR complexes and profoundly impact their biogenesis and protein processing. In terms of tissue distribution, expressed in the brain (at protein level).

It localises to the cell membrane. The protein localises to the synapse. Its function is as follows. As a component of the inner core of AMPAR complexes, modifies AMPA receptor (AMPAR) gating. This Rattus norvegicus (Rat) protein is Germ cell-specific gene 1-like protein (Gsg1l).